The sequence spans 587 residues: MFS-type transporter opaD (587 aa).

A run of 9 helical transmembrane segments spans residues 87-107, 124-146, 153-173, 184-204, 214-234, 242-262, 284-304, 315-335, and 357-377; these read VAIM…NTIL, MGWY…GKLL, WVYI…GVSP, ISGT…TIIV, GILS…GGAF, WCFY…LLLF, IIGL…LQWG, IIAL…VEYW, and LFTF…PIWF. Residue N382 is glycosylated (N-linked (GlcNAc...) asparagine). A run of 5 helical transmembrane segments spans residues 393–413, 414–434, 447–467, 483–503, and 554–574; these read IPLI…VTTL, GYYI…AGLL, IGFQ…PLVV, LVTL…QSVF, and VYLV…PIRW.

The protein belongs to the major facilitator superfamily. TCR/Tet family.

It is found in the membrane. Functionally, MFS-type transporter; part of the gene cluster that mediates the biosynthesis of oxepinamides, derivatives of anthranilyl-containing tripeptides that share an oxepin ring and a fused pyrimidinone moiety. The protein is MFS-type transporter opaD of Aspergillus ustus.